A 122-amino-acid chain; its full sequence is Conotoxin flf14c (122 aa).

Positions 1-22 are cleaved as a signal peptide; it reads MGFRVLVLIVMVTTSALPFTFS. Residues 23–96 constitute a propeptide that is removed on maturation; sequence EESGRSPFRP…AESPVGQKRW (74 aa). Residues 53–89 are disordered; that stretch reads RADGQTPDMHQPEMRRPEMRRPEVRRPEVRQPEFAES. Residues 62–85 show a composition bias toward basic and acidic residues; it reads HQPEMRRPEMRRPEVRRPEVRQPE. 2 cysteine pairs are disulfide-bonded: C101–C121 and C105–C117.

In terms of tissue distribution, expressed by the venom duct.

Its subcellular location is the secreted. This is Conotoxin flf14c from Conus anabathrum floridanus (Florida cone).